The primary structure comprises 454 residues: UDP-N-acetylmuramoylalanine--D-glutamate ligase (454 aa).

116–122 (GTNGKTS) contributes to the ATP binding site.

Belongs to the MurCDEF family.

It is found in the cytoplasm. The catalysed reaction is UDP-N-acetyl-alpha-D-muramoyl-L-alanine + D-glutamate + ATP = UDP-N-acetyl-alpha-D-muramoyl-L-alanyl-D-glutamate + ADP + phosphate + H(+). The protein operates within cell wall biogenesis; peptidoglycan biosynthesis. Cell wall formation. Catalyzes the addition of glutamate to the nucleotide precursor UDP-N-acetylmuramoyl-L-alanine (UMA). The chain is UDP-N-acetylmuramoylalanine--D-glutamate ligase from Lachnoclostridium phytofermentans (strain ATCC 700394 / DSM 18823 / ISDg) (Clostridium phytofermentans).